Here is a 167-residue protein sequence, read N- to C-terminus: Phospholipase A2 imperatoxin-1 (167 aa).

Ca(2+)-binding residues include Trp-38, Gly-40, and Gly-42. 5 disulfide bridges follow: Cys-39–Cys-61, Cys-60–Cys-99, Cys-67–Cys-92, Cys-90–Cys-127, and Cys-132–Cys-144. His-64 is an active-site residue. Ca(2+) is bound at residue Asp-65. N-linked (GlcNAc...) asparagine glycosylation occurs at Asn-102. Residues 136 to 140 (RRLAR) constitute a propeptide that is removed on maturation.

It belongs to the phospholipase A2 family. Group III subfamily. In terms of assembly, heterodimer composed of a large subunit and a small subunit; disulfide-linked. It depends on Ca(2+) as a cofactor. Expressed by the venom gland.

It is found in the secreted. The catalysed reaction is a 1,2-diacyl-sn-glycero-3-phosphocholine + H2O = a 1-acyl-sn-glycero-3-phosphocholine + a fatty acid + H(+). In terms of biological role, phospholipase toxin, which may catalyze the calcium-dependent hydrolysis of the 2-acyl groups in 3-sn-phosphoglycerides. Inhibits both skeletal (RYR1) and cardiac (RYR2) ryanodine receptors (calcium release channels). Probably blocks ryanodine receptors by generating a lipid product. The sequence is that of Phospholipase A2 imperatoxin-1 from Pandinus imperator (Emperor scorpion).